Consider the following 156-residue polypeptide: ADP-ribosylation factor-like protein 2-binding protein (156 aa).

Belongs to the ARL2BP family.

Its subcellular location is the cytoplasm. The protein localises to the mitochondrion intermembrane space. It localises to the cytoskeleton. The protein resides in the microtubule organizing center. It is found in the centrosome. Its subcellular location is the nucleus. The protein localises to the spindle. It localises to the cilium basal body. Its function is as follows. Plays a role as an effector of the ADP-ribosylation factor-like protein 2, ARL2. This Xenopus laevis (African clawed frog) protein is ADP-ribosylation factor-like protein 2-binding protein (arl2bp).